The sequence spans 176 residues: Adenine phosphoribosyltransferase (176 aa).

It belongs to the purine/pyrimidine phosphoribosyltransferase family. Homodimer.

It is found in the cytoplasm. It carries out the reaction AMP + diphosphate = 5-phospho-alpha-D-ribose 1-diphosphate + adenine. It functions in the pathway purine metabolism; AMP biosynthesis via salvage pathway; AMP from adenine: step 1/1. Functionally, catalyzes a salvage reaction resulting in the formation of AMP, that is energically less costly than de novo synthesis. The sequence is that of Adenine phosphoribosyltransferase from Borrelia garinii subsp. bavariensis (strain ATCC BAA-2496 / DSM 23469 / PBi) (Borreliella bavariensis).